Reading from the N-terminus, the 67-residue chain is Large ribosomal subunit protein uL29 (67 aa).

This sequence belongs to the universal ribosomal protein uL29 family.

The chain is Large ribosomal subunit protein uL29 from Moorella thermoacetica (strain ATCC 39073 / JCM 9320).